Consider the following 421-residue polypeptide: Gamma-glutamyl phosphate reductase (421 aa).

This sequence belongs to the gamma-glutamyl phosphate reductase family.

The protein localises to the cytoplasm. It carries out the reaction L-glutamate 5-semialdehyde + phosphate + NADP(+) = L-glutamyl 5-phosphate + NADPH + H(+). The protein operates within amino-acid biosynthesis; L-proline biosynthesis; L-glutamate 5-semialdehyde from L-glutamate: step 2/2. Functionally, catalyzes the NADPH-dependent reduction of L-glutamate 5-phosphate into L-glutamate 5-semialdehyde and phosphate. The product spontaneously undergoes cyclization to form 1-pyrroline-5-carboxylate. The sequence is that of Gamma-glutamyl phosphate reductase from Pseudomonas fluorescens (strain SBW25).